The primary structure comprises 984 residues: Putative formate dehydrogenase SAV2309 (984 aa).

The region spanning 3–79 (EHLVVTLDGK…PMTVNTVNND (77 aa)) is the 2Fe-2S ferredoxin-type domain. [2Fe-2S] cluster-binding residues include C37, C48, C51, and C63. The 41-residue stretch at 79-119 (DVKDAQKEALDRILEKHMLYCTVCDYNNGDCEIHNTMDAWG) folds into the 4Fe-4S His(Cys)3-ligated-type domain. [4Fe-4S] cluster contacts are provided by H95, C99, C102, C109, C147, C150, C153, C157, C190, C193, C196, C200, C264, C267, C271, and C299. 4Fe-4S ferredoxin-type domains are found at residues 138 to 165 (PFYR…VNET) and 181 to 211 (NDVP…VNME). Positions 252 to 984 (MRKERIKKTK…YVFPGNQVDK (733 aa)) are formate dehydrogenase. Residues 257-313 (IKKTKTVCTYCGVGCSFEVWTKDREILKVQPSHDSPANKIVTCVKGKFSWGHINSDQ) enclose the 4Fe-4S Mo/W bis-MGD-type domain.

The protein in the C-terminal section; belongs to the prokaryotic molybdopterin-containing oxidoreductase family. Requires [2Fe-2S] cluster as cofactor. The cofactor is [4Fe-4S] cluster. It depends on Mo-bis(molybdopterin guanine dinucleotide) as a cofactor.

The catalysed reaction is formate + NAD(+) = CO2 + NADH. This Staphylococcus aureus (strain Mu50 / ATCC 700699) protein is Putative formate dehydrogenase SAV2309.